The sequence spans 127 residues: Large-conductance mechanosensitive channel (127 aa).

The next 3 helical transmembrane spans lie at 19-39 (VGVI…TNII), 42-62 (LLGI…VGSA), and 67-87 (GAFI…FLLI).

The protein belongs to the MscL family. Homopentamer.

It localises to the cell membrane. Channel that opens in response to stretch forces in the membrane lipid bilayer. May participate in the regulation of osmotic pressure changes within the cell. This chain is Large-conductance mechanosensitive channel, found in Levilactobacillus brevis (strain ATCC 367 / BCRC 12310 / CIP 105137 / JCM 1170 / LMG 11437 / NCIMB 947 / NCTC 947) (Lactobacillus brevis).